Reading from the N-terminus, the 359-residue chain is Outer membrane protein P2 (359 aa).

Residues 1–20 form the signal peptide; sequence MKKTLAALIVGAFAASAANA.

It belongs to the Gram-negative porin family. As to quaternary structure, homotrimer.

It localises to the cell outer membrane. Functionally, forms pores that allow passive diffusion of small molecules across the outer membrane. The chain is Outer membrane protein P2 (ompP2) from Haemophilus influenzae (strain ATCC 51907 / DSM 11121 / KW20 / Rd).